The primary structure comprises 161 residues: Ribosome maturation factor RimP (161 aa).

The protein belongs to the RimP family.

Its subcellular location is the cytoplasm. In terms of biological role, required for maturation of 30S ribosomal subunits. This chain is Ribosome maturation factor RimP, found in Rickettsia massiliae (strain Mtu5).